Reading from the N-terminus, the 1151-residue chain is Ankyrin and IPT/TIG repeat-containing protein C26H5.05 (1151 aa).

3 disordered regions span residues 77–104, 452–511, and 516–535; these read NLPS…AECL, KSRN…ENSR, and QLSA…KSVE. Residues 87-98 are compositionally biased toward polar residues; it reads SHASSPNLSNSQ. Residues 452–463 are compositionally biased toward basic and acidic residues; that stretch reads KSRNLTKSEKTG. 2 stretches are compositionally biased toward polar residues: residues 464-496 and 517-532; these read KSNS…SDNP and LSAS…STLK. Positions 658 to 739 constitute an IPT/TIG domain; that stretch reads PLISRIIPNK…SSEAPVMFTY (82 aa). 2 ANK repeats span residues 861 to 890 and 894 to 923; these read SGRS…DVNK and LGYT…KPDV. The disordered stretch occupies residues 1041-1067; it reads PPPYSEFADDTTAQAGSSKRDSAISED. A compositionally biased stretch (basic and acidic residues) spans 1058 to 1067; sequence SKRDSAISED. The chain crosses the membrane as a helical span at residues 1113-1133; the sequence is MDFMLFSFWLPALLLLSIFGL.

The protein resides in the vacuole membrane. This chain is Ankyrin and IPT/TIG repeat-containing protein C26H5.05, found in Schizosaccharomyces pombe (strain 972 / ATCC 24843) (Fission yeast).